Reading from the N-terminus, the 245-residue chain is Orotidine 5'-phosphate decarboxylase (245 aa).

Substrate contacts are provided by residues D22, K44, 71–80 (DLKFHDIPNT), T131, R192, Q201, G221, and R222. The active-site Proton donor is the K73.

This sequence belongs to the OMP decarboxylase family. Type 1 subfamily. Homodimer.

It catalyses the reaction orotidine 5'-phosphate + H(+) = UMP + CO2. It functions in the pathway pyrimidine metabolism; UMP biosynthesis via de novo pathway; UMP from orotate: step 2/2. Functionally, catalyzes the decarboxylation of orotidine 5'-monophosphate (OMP) to uridine 5'-monophosphate (UMP). The chain is Orotidine 5'-phosphate decarboxylase from Klebsiella pneumoniae (strain 342).